Here is a 512-residue protein sequence, read N- to C-terminus: MLFEGLDLVSALATLAACLVSVTLLLAVSQQLWQLRWAATRDKSCKLPIPKGSMGFPLIGETGHWLLQGSGFQSSRREKYGNVFKTHLLGRPLIRVTGAENVRKILMGEHHLVSTEWPRSTRMLLGPNTVSNSIGDIHRNKRKVFSKIFSHEALESYLPKIQLVIQDTLRAWSSHPEAINVYQEAQKLTFRMAIRVLLGFSIPEEDLGHLFEVYQQFVDNVFSLPVDLPFSGYRRGIQARQILQKGLEKAIREKLQCTQGKDYLDALDLLIESSKEHGKEMTMQELKDGTLELIFAAYATTASASTSLIMQLLKHPTVLEKLRDELRAHGILHSGGCPCEGTLRLDTLSGLRYLDCVIKEVMRLFTPISGGYRTVLQTFELDGFQIPKGWSVMYSIRDTHDTAPVFKDVNVFDPDRFSQARSEDKDGRFHYLPFGGGVRTCLGKHLAKLFLKVLAVELASTSRFELATRTFPRITLVPVLHPVDGLSVKFFGLDSNQNEILPETEAMLSATV.

C441 provides a ligand contact to heme.

It belongs to the cytochrome P450 family. It depends on heme as a cofactor. In terms of tissue distribution, highly expressed in brain, particularly in the cerebellum and pons.

The protein localises to the endoplasmic reticulum membrane. Its subcellular location is the microsome membrane. It catalyses the reaction all-trans-retinoate + reduced [NADPH--hemoprotein reductase] + O2 = all-trans-4-hydroxyretinoate + oxidized [NADPH--hemoprotein reductase] + H2O + H(+). The catalysed reaction is all-trans-retinoate + reduced [NADPH--hemoprotein reductase] + O2 = all-trans-18-hydroxyretinoate + oxidized [NADPH--hemoprotein reductase] + H2O + H(+). A cytochrome P450 monooxygenase involved in the metabolism of retinoates (RAs), the active metabolites of vitamin A, and critical signaling molecules in animals. RAs exist as at least four different isomers: all-trans-RA (atRA), 9-cis-RA, 13-cis-RA, and 9,13-dicis-RA, where atRA is considered to be the biologically active isomer, although 9-cis-RA and 13-cis-RA also have activity. Catalyzes the hydroxylation of atRA primarily at C-4 and C-18, thereby contributing to the regulation of atRA homeostasis and signaling. Hydroxylation of atRA limits its biological activity and initiates a degradative process leading to its eventual elimination. Involved in the convertion of atRA to all-trans-4-oxo-RA. Can oxidize all-trans-13,14-dihydroretinoate (DRA) to metabolites which could include all-trans-4-oxo-DRA, all-trans-4-hydroxy-DRA, all-trans-5,8-epoxy-DRA, and all-trans-18-hydroxy-DRA. Shows preference for the following substrates: atRA &gt; 9-cis-RA &gt; 13-cis-RA. Plays a central role in germ cell development: acts by degrading RAs in the developing testis, preventing STRA8 expression, thereby leading to delay of meiosis. Required for the maintenance of the undifferentiated state of male germ cells during embryonic development in Sertoli cells, inducing arrest in G0 phase of the cell cycle and preventing meiotic entry. Plays a role in skeletal development, both at the level of patterning and in the ossification of bone and the establishment of some synovial joints. Essential for postnatal survival. Its function is as follows. Also has a significant activity in oxidation of tazarotenic acid and may therefore metabolize that xenobiotic in vivo. This chain is Cytochrome P450 26B1 (CYP26B1), found in Homo sapiens (Human).